The sequence spans 469 residues: Fe(3+)-Zn(2+) purple acid phosphatase 12 (469 aa).

A signal peptide spans 1 to 28; sequence MSSRSDLKIKRVSLIIFLLSVLVEFCYG. Residue Asn114 is glycosylated (N-linked (GlcNAc...) asparagine). Fe cation is bound at residue Asp168. N-linked (GlcNAc...) asparagine glycosylation is present at Asn176. Positions 197 and 200 each coordinate Fe cation. Asp197 lines the Zn(2+) pocket. Asn234 contributes to the Zn(2+) binding site. Residue Asn234 participates in substrate binding. N-linked (GlcNAc...) asparagine glycosylation occurs at Asn307. His319 lines the Zn(2+) pocket. His329 (proton donor) is an active-site residue. A Zn(2+)-binding site is contributed by His356. Residue 356 to 358 coordinates substrate; that stretch reads HVH. His358 serves as a coordination point for Fe cation. An N-linked (GlcNAc...) asparagine glycan is attached at Asn429.

It belongs to the metallophosphoesterase superfamily. Purple acid phosphatase family. In terms of assembly, homodimer; disulfide-linked. The cofactor is Fe cation. Zn(2+) serves as cofactor. As to expression, expressed in roots, stems, leaves, flowers and siliques.

The protein resides in the secreted. It carries out the reaction a phosphate monoester + H2O = an alcohol + phosphate. The polypeptide is Fe(3+)-Zn(2+) purple acid phosphatase 12 (PAP12) (Arabidopsis thaliana (Mouse-ear cress)).